Here is a 642-residue protein sequence, read N- to C-terminus: Bifunctional protein glk (642 aa).

The glucokinase stretch occupies residues 1 to 340 (MSTGAQSKAA…QLSNRSGGAS (340 aa)). 23–28 (ADVGGT) provides a ligand contact to ATP. The HTH rpiR-type domain maps to 341–417 (SAVFERIRQM…LKLATGLTGT (77 aa)). The interval 341-642 (SAVFERIRQM…SPAAKDVARD (302 aa)) is putative HTH-type transcriptional regulator. Positions 377 to 396 (IVDIARKADVSQPTVIRFCR) form a DNA-binding region, H-T-H motif. One can recognise an SIS domain in the interval 461 to 600 (AIEILNGARR…AVGVAIRRAS (140 aa)). A helical membrane pass occupies residues 576-596 (SMISRILHLLMIDILAVGVAI).

This sequence in the N-terminal section; belongs to the bacterial glucokinase family.

Its subcellular location is the membrane. The catalysed reaction is D-glucose + ATP = D-glucose 6-phosphate + ADP + H(+). This chain is Bifunctional protein glk (glk), found in Burkholderia lata (strain ATCC 17760 / DSM 23089 / LMG 22485 / NCIMB 9086 / R18194 / 383).